Here is a 506-residue protein sequence, read N- to C-terminus: Histidine ammonia-lyase (506 aa).

The segment at residues 143 to 145 (ASG) is a cross-link (5-imidazolinone (Ala-Gly)). Ser144 is modified (2,3-didehydroalanine (Ser)).

This sequence belongs to the PAL/histidase family. Contains an active site 4-methylidene-imidazol-5-one (MIO), which is formed autocatalytically by cyclization and dehydration of residues Ala-Ser-Gly.

Its subcellular location is the cytoplasm. The enzyme catalyses L-histidine = trans-urocanate + NH4(+). Its pathway is amino-acid degradation; L-histidine degradation into L-glutamate; N-formimidoyl-L-glutamate from L-histidine: step 1/3. This is Histidine ammonia-lyase from Salmonella arizonae (strain ATCC BAA-731 / CDC346-86 / RSK2980).